The following is a 104-amino-acid chain: Large ribosomal subunit protein uL23 (104 aa).

Belongs to the universal ribosomal protein uL23 family. As to quaternary structure, part of the 50S ribosomal subunit. Contacts protein L29, and trigger factor when it is bound to the ribosome.

Functionally, one of the early assembly proteins it binds 23S rRNA. One of the proteins that surrounds the polypeptide exit tunnel on the outside of the ribosome. Forms the main docking site for trigger factor binding to the ribosome. The sequence is that of Large ribosomal subunit protein uL23 from Cupriavidus metallidurans (strain ATCC 43123 / DSM 2839 / NBRC 102507 / CH34) (Ralstonia metallidurans).